A 403-amino-acid polypeptide reads, in one-letter code: S-adenosylmethionine synthase (403 aa).

141–146 contacts ATP; it reads GQGSVD.

This sequence belongs to the AdoMet synthase 2 family. Mg(2+) serves as cofactor.

The catalysed reaction is L-methionine + ATP + H2O = S-adenosyl-L-methionine + phosphate + diphosphate. It participates in amino-acid biosynthesis; S-adenosyl-L-methionine biosynthesis; S-adenosyl-L-methionine from L-methionine: step 1/1. Catalyzes the formation of S-adenosylmethionine from methionine and ATP. The sequence is that of S-adenosylmethionine synthase from Methanococcus aeolicus (strain ATCC BAA-1280 / DSM 17508 / OCM 812 / Nankai-3).